Reading from the N-terminus, the 308-residue chain is uncharacterized protein (308 aa).

Positions 15-81 (MRVDTGLARL…QNTPIDIEGM (67 aa)) constitute an S4 RNA-binding domain. Aspartate 139 is a catalytic residue.

It belongs to the pseudouridine synthase RluA family.

It carries out the reaction a uridine in RNA = a pseudouridine in RNA. This is an uncharacterized protein from Mycobacterium tuberculosis (strain CDC 1551 / Oshkosh).